A 343-amino-acid chain; its full sequence is 5-amino-6-(D-ribitylamino)uracil--L-tyrosine 4-hydroxyphenyl transferase (343 aa).

The region spanning 39–268 is the Radical SAM core domain; that stretch reads VTYVVNRNIN…AIARILLYPE (230 aa). Positions 53, 57, and 60 each coordinate [4Fe-4S] cluster.

Belongs to the radical SAM superfamily. CofH family. Consists of two subunits, CofG and CofH. [4Fe-4S] cluster serves as cofactor.

The enzyme catalyses 5-amino-6-(D-ribitylamino)uracil + L-tyrosine + S-adenosyl-L-methionine = 5-amino-5-(4-hydroxybenzyl)-6-(D-ribitylimino)-5,6-dihydrouracil + 2-iminoacetate + 5'-deoxyadenosine + L-methionine + H(+). Its pathway is cofactor biosynthesis; coenzyme F0 biosynthesis. Functionally, catalyzes the radical-mediated synthesis of 5-amino-5-(4-hydroxybenzyl)-6-(D-ribitylimino)-5,6-dihydrouracil from 5-amino-6-(D-ribitylamino)uracil and L-tyrosine. The chain is 5-amino-6-(D-ribitylamino)uracil--L-tyrosine 4-hydroxyphenyl transferase from Archaeoglobus fulgidus (strain ATCC 49558 / DSM 4304 / JCM 9628 / NBRC 100126 / VC-16).